The following is a 99-amino-acid chain: Small ribosomal subunit protein bS20 (99 aa).

It belongs to the bacterial ribosomal protein bS20 family.

Its function is as follows. Binds directly to 16S ribosomal RNA. The polypeptide is Small ribosomal subunit protein bS20 (Picosynechococcus sp. (strain ATCC 27264 / PCC 7002 / PR-6) (Agmenellum quadruplicatum)).